Consider the following 71-residue polypeptide: U3-scytotoxin-Sth1h (71 aa).

An N-terminal signal peptide occupies residues 1 to 33; the sequence is MSQNSITSYKMGFAKHFFLFAVLLCATAMYSVA. Residues 34–39 constitute a propeptide that is removed on maturation; that stretch reads EPAQER. Disulfide bonds link C46–C60, C53–C64, and C59–C69.

Expressed by the venom gland.

The protein localises to the secreted. Probable insect neurotoxin with ion channel impairing activity. Does not show activity on 45 human receptors from 9 families (5-hydroxytryptamine, adrenergic, dopamine, muscarinic, histamine, neurotransmitter, opioid, sigma, and gaba(A) receptors). In vivo, when mixed with U3-SYTX-Sth1a does not cause paralytic or lethal activity when injected into crickets. It is noteworthy that crickets are evolutionarily distant from prey species. The protein is U3-scytotoxin-Sth1h of Scytodes thoracica (Spitting spider).